The chain runs to 2150 residues: Hybrid signal transduction histidine kinase A (2150 aa).

Basic and acidic residues predominate over residues 1–10 (MELKTFKDLN). Disordered stretches follow at residues 1–41 (MELK…QQQQ), 68–149 (HIPQ…YYYS), 184–267 (NSSS…HQRR), 286–323 (KNKP…GSLG), 339–359 (TEES…NCGS), 415–505 (NNNN…NSPR), 520–546 (SLTS…GRNG), and 560–733 (KPVV…NGAT). A compositionally biased stretch (polar residues) spans 19 to 32 (PVINTGDQPNPLRT). The span at 68-81 (HIPQQLYQKQQQQQ) shows a compositional bias: low complexity. The span at 82–104 (HSHSYGNHSFIHNVSPTSPSYDI) shows a compositional bias: polar residues. 2 stretches are compositionally biased toward low complexity: residues 105–145 (NNNN…YNNN) and 184–244 (NSSS…NNNI). Residues 289–304 (PLSSSTPSTVNTCGAV) show a composition bias toward polar residues. Low complexity-rich tracts occupy residues 305–318 (NNNS…NNNS), 344–359 (GGNN…NCGS), and 415–447 (NNNN…HNIS). Positions 448–468 (PRGSNISPRSNNGGSTTISPR) are enriched in polar residues. Composition is skewed to low complexity over residues 469 to 485 (NISN…NNNI), 520 to 545 (SLTS…NGRN), and 565 to 600 (NNGN…INNN). Over residues 614–628 (SKTNSLQDFETSSMN) the composition is skewed to polar residues. Residues 657 to 727 (NSNNTNSNNS…NNNNNNNNNN (71 aa)) show a composition bias toward low complexity. A helical transmembrane segment spans residues 772–792 (AIILGLFIVGSSISILATLVL). In terms of domain architecture, CHASE spans 838–1082 (STSEDQFVPF…NVGGRNWMIA (245 aa)). Residues 1098–1118 (PYAIGGVCMLLSALVSFWFAV) form a helical membrane-spanning segment. The stretch at 1139 to 1164 (NRKLAEKALAESQERLELAMEGSEDA) forms a coiled coil. Disordered stretches follow at residues 1209–1228 (LNFK…FNLF) and 1233–1252 (VDSS…GGGG). The region spanning 1235-1317 (SSSPQSITNV…SEIKKTITRE (83 aa)) is the PAS domain. One can recognise a PAC domain in the interval 1321–1376 (MEIECRMRKKYGGYLYIIMRGKVVSNETSFKDNSLRMAGTLRDMTSRKDMQRLILE). A Histidine kinase domain is found at 1393–1620 (TVSHEVRTPL…KFKCIIPFLL (228 aa)). The residue at position 1396 (H1396) is a Phosphohistidine; by autocatalysis. Disordered stretches follow at residues 1874 to 1893 (GGGS…NNNF), 1933 to 1952 (HGNQ…NNSS), and 1962 to 2017 (QNNN…DTPV). Composition is skewed to low complexity over residues 1878–1893 (NTMN…NNNF), 1935–1952 (NQQQ…NNSS), and 1962–2002 (QNNN…TPTL). Residues 2026–2146 (KALIVEDNEL…TLKDALAKWG (121 aa)) enclose the Response regulatory domain. D2076 carries the post-translational modification 4-aspartylphosphate.

In terms of assembly, interacts with SDF-2, an acbA peptide involved in sporulation.

The protein localises to the cell membrane. It catalyses the reaction ATP + protein L-histidine = ADP + protein N-phospho-L-histidine.. Acts as a receptor histidine kinase for the cytokinin SDF-2 in a signal transduction pathway that regulates prestalk gene expression and controls terminal differentiation of prespore cells. Binding of SDF-2 to this protein inhibits phosphorelay and induces rapid sporulation. This protein undergoes an ATP-dependent autophosphorylation at a conserved histidine residue in the kinase core, and a phosphoryl group is then transferred to a conserved aspartate residue in the receiver domain. This is Hybrid signal transduction histidine kinase A (dhkA) from Dictyostelium discoideum (Social amoeba).